The sequence spans 1190 residues: DNA-directed RNA polymerase subunit beta (1190 aa).

This sequence belongs to the RNA polymerase beta chain family. As to quaternary structure, the RNAP catalytic core consists of 2 alpha, 1 beta, 1 beta' and 1 omega subunit. When a sigma factor is associated with the core the holoenzyme is formed, which can initiate transcription.

The enzyme catalyses RNA(n) + a ribonucleoside 5'-triphosphate = RNA(n+1) + diphosphate. DNA-dependent RNA polymerase catalyzes the transcription of DNA into RNA using the four ribonucleoside triphosphates as substrates. The protein is DNA-directed RNA polymerase subunit beta of Geobacillus thermodenitrificans (strain NG80-2).